The primary structure comprises 277 residues: Thymidylate synthase (277 aa).

Residue Arg-21 participates in dUMP binding. Residue His-51 participates in (6R)-5,10-methylene-5,6,7,8-tetrahydrofolate binding. Arg-126 to Arg-127 contacts dUMP. Residue Cys-159 is the Nucleophile of the active site. DUMP contacts are provided by residues Arg-179 to Asp-182, Asn-190, and His-220 to Tyr-222. Residue Asp-182 coordinates (6R)-5,10-methylene-5,6,7,8-tetrahydrofolate. (6R)-5,10-methylene-5,6,7,8-tetrahydrofolate is bound at residue Ser-276.

Belongs to the thymidylate synthase family. Bacterial-type ThyA subfamily. In terms of assembly, homodimer.

It localises to the cytoplasm. The enzyme catalyses dUMP + (6R)-5,10-methylene-5,6,7,8-tetrahydrofolate = 7,8-dihydrofolate + dTMP. Its pathway is pyrimidine metabolism; dTTP biosynthesis. In terms of biological role, catalyzes the reductive methylation of 2'-deoxyuridine-5'-monophosphate (dUMP) to 2'-deoxythymidine-5'-monophosphate (dTMP) while utilizing 5,10-methylenetetrahydrofolate (mTHF) as the methyl donor and reductant in the reaction, yielding dihydrofolate (DHF) as a by-product. This enzymatic reaction provides an intracellular de novo source of dTMP, an essential precursor for DNA biosynthesis. The sequence is that of Thymidylate synthase from Teredinibacter turnerae (strain ATCC 39867 / T7901).